Here is a 355-residue protein sequence, read N- to C-terminus: MKVDPNKEKALAAVLIQIEKQFGKGSIMKLGEDRSMDVETISTGSLSLDVALGAGGLPMGRIVEIYGPESSGKTTLTLEVIAAAQREGKTCAFIDAEHALDPIYAKKLGVDIDNLLCSQPDTGEQALEICDALTRSGAVDVIVVDSVAALTPKAEIEGEIGDSHMGLAARMMSQAMRKLAGNLKQSNTLLIFINQIRMKIGVMFGNPETTTGGNALKFYASVRLDIRRTGAIKDGDEVVGNETRVKVVKNKVAAPFKQAEFQILYGQGINRTGELVDLGVAHKLIEKAGAWYSYKGDKIGQGRANAGKYLTENPAIATEIDKTLRELLLSNPSALAAKADASTEDNVDLETGEVF.

Residue 67-74 participates in ATP binding; it reads GPESSGKT.

Belongs to the RecA family.

The protein resides in the cytoplasm. Its function is as follows. Can catalyze the hydrolysis of ATP in the presence of single-stranded DNA, the ATP-dependent uptake of single-stranded DNA by duplex DNA, and the ATP-dependent hybridization of homologous single-stranded DNAs. It interacts with LexA causing its activation and leading to its autocatalytic cleavage. The chain is Protein RecA from Shewanella baltica (strain OS223).